We begin with the raw amino-acid sequence, 364 residues long: Phosphoserine aminotransferase (364 aa).

Arginine 46 contacts L-glutamate. Pyridoxal 5'-phosphate contacts are provided by residues 80-81 (AR), tryptophan 106, threonine 157, aspartate 176, and glutamine 199. An N6-(pyridoxal phosphate)lysine modification is found at lysine 200. Residue 241–242 (NT) participates in pyridoxal 5'-phosphate binding.

The protein belongs to the class-V pyridoxal-phosphate-dependent aminotransferase family. SerC subfamily. In terms of assembly, homodimer. The cofactor is pyridoxal 5'-phosphate.

Its subcellular location is the cytoplasm. It carries out the reaction O-phospho-L-serine + 2-oxoglutarate = 3-phosphooxypyruvate + L-glutamate. The enzyme catalyses 4-(phosphooxy)-L-threonine + 2-oxoglutarate = (R)-3-hydroxy-2-oxo-4-phosphooxybutanoate + L-glutamate. It participates in amino-acid biosynthesis; L-serine biosynthesis; L-serine from 3-phospho-D-glycerate: step 2/3. It functions in the pathway cofactor biosynthesis; pyridoxine 5'-phosphate biosynthesis; pyridoxine 5'-phosphate from D-erythrose 4-phosphate: step 3/5. Catalyzes the reversible conversion of 3-phosphohydroxypyruvate to phosphoserine and of 3-hydroxy-2-oxo-4-phosphonooxybutanoate to phosphohydroxythreonine. The polypeptide is Phosphoserine aminotransferase (Vibrio vulnificus (strain YJ016)).